The following is a 306-amino-acid chain: tRNA dimethylallyltransferase (306 aa).

15 to 22 contributes to the ATP binding site; it reads GPTASGKS. 17–22 is a binding site for substrate; it reads TASGKS. The interaction with substrate tRNA stretch occupies residues 40–43; it reads DSMQ.

It belongs to the IPP transferase family. Monomer. Mg(2+) is required as a cofactor.

It carries out the reaction adenosine(37) in tRNA + dimethylallyl diphosphate = N(6)-dimethylallyladenosine(37) in tRNA + diphosphate. Its function is as follows. Catalyzes the transfer of a dimethylallyl group onto the adenine at position 37 in tRNAs that read codons beginning with uridine, leading to the formation of N6-(dimethylallyl)adenosine (i(6)A). The sequence is that of tRNA dimethylallyltransferase from Methylobacterium sp. (strain 4-46).